A 1883-amino-acid chain; its full sequence is AF4/FMR2 family member lilli (1883 aa).

The span at 1–45 shows a compositional bias: low complexity; it reads MAQQQQQQHLQQQQQQHHQQQQLQQLQQQQQLPQYNNNLYNLNYN. Disordered stretches follow at residues 1–88, 140–311, 329–381, 449–540, 609–654, 796–827, 844–901, 922–962, 992–1018, 1039–1075, 1115–1145, 1170–1238, 1358–1413, 1450–1510, 1543–1583, 1595–1641, and 1783–1803; these read MAQQ…SEGD, INST…EKDI, SIAA…SCTT, MPTP…HHQH, LGGG…HLSR, SISS…TLQI, MQQK…KKHA, TAAA…LAKG, VAGS…LHAA, TAAA…ATAT, KNNR…QHKQ, QHQQ…KSDK, YAAE…GART, EHGV…DQVS, ANGS…KATT, QTST…PPSD, and PSNS…RIVP. Positions 57–80 are enriched in basic and acidic residues; the sequence is REKYERQQGIQSDDRETSLFEAPR. Composition is skewed to low complexity over residues 140 to 154, 161 to 178, 223 to 253, and 362 to 381; these read INST…SLLP, QQQQ…QQQQ, SASS…ASTA, and PLNS…SCTT. Pro residues predominate over residues 450–462; sequence PTPPKASPTPPTA. Thr458 is modified (phosphothreonine). Basic and acidic residues predominate over residues 466-479; it reads LKSEKNHSLEKQDS. Over residues 481-491 the composition is skewed to acidic residues; sequence LENDLELSESD. Phosphoserine is present on residues Ser488 and Ser490. A compositionally biased stretch (low complexity) spans 500–540; that stretch reads SAGNSSNSSETDSSESGSEASSKGEAQQQQQQQQQLLHHQH. Over residues 609–625 the composition is skewed to gly residues; sequence LGGGGGSGSTGGGGGSS. 2 stretches are compositionally biased toward low complexity: residues 626–639 and 796–813; these read SSGM…SSSN and SISS…SAAG. The segment covering 867 to 877 has biased composition (basic residues); sequence PRQKKPRKKKM. Phosphoserine occurs at positions 887 and 888. The a.T hook DNA-binding region spans 930–942; the sequence is KKGRGRPRKQQQQ. A compositionally biased stretch (low complexity) spans 939-962; the sequence is QQQQLQQTQSGNLSSASAGSLAKG. A phosphoserine mark is found at Ser953 and Ser955. Composition is skewed to low complexity over residues 1124–1145, 1170–1186, 1200–1222, 1362–1376, and 1385–1399; these read SSSN…QHKQ, QHQQ…QQQQ, SSSS…SSSS, QQQQ…QQLH, and HYQQ…KAQQ. Residues 1450–1467 are compositionally biased toward basic and acidic residues; sequence EHGVKPEPELDAGYEAKY. Ser1546 is subject to Phosphoserine. Thr1548 bears the Phosphothreonine mark. 2 stretches are compositionally biased toward low complexity: residues 1558–1583 and 1595–1606; these read QQQQ…KATT and QTSTTATQQPTT. Pro residues predominate over residues 1614-1625; that stretch reads TPPPVAPPPPPR. Over residues 1783-1794 the composition is skewed to low complexity; it reads PSNSVGSQGSGS.

This sequence belongs to the AF4 family.

The protein localises to the nucleus. Functionally, has a role in transcriptional regulation. Acts in parallel with the Ras/MAPK and the PI3K/PKB pathways in the control of cell identity and cellular growth. Essential for regulation of the cytoskeleton and cell growth but not for cell proliferation or growth rate. Required specifically for the microtubule-based basal transport of lipid droplets. Plays a partially redundant function downstream of Raf in cell fate specification in the developing eye. Pair-rule protein that regulates embryonic cellularization, gastrulation and segmentation. This chain is AF4/FMR2 family member lilli, found in Drosophila grimshawi (Hawaiian fruit fly).